The chain runs to 215 residues: MSEVKGLLVMDVDSTLVQEEVIDLLGEEAGVGREVAEITERAMRGELDFRQALNERVATLKGLPDSIFEKVYARIHFNKGAKELVDELHSRGFKVGLVSGGFHETVDRLAKEAGIDYVKANHLEVIDGFLTGKVYGEIVTKDVKVAKLKDWAAENGLKLSQTIAMGDGANDLPMIKTAGIGIAFCAKPIVRVQAPYQITEPDLYKVIEILDEVGK.

D11 functions as the Nucleophile in the catalytic mechanism. Positions 11 and 13 each coordinate Mg(2+). Residue D13 is the Proton donor of the active site. Substrate contacts are provided by residues E20, R56, 99–100 (SG), and K144. D167 contacts Mg(2+). Substrate is bound at residue N170.

This sequence belongs to the HAD-like hydrolase superfamily. SerB family. Mg(2+) is required as a cofactor.

It carries out the reaction O-phospho-L-serine + H2O = L-serine + phosphate. The catalysed reaction is O-phospho-D-serine + H2O = D-serine + phosphate. Its pathway is amino-acid biosynthesis; L-serine biosynthesis; L-serine from 3-phospho-D-glycerate: step 3/3. This is Phosphoserine phosphatase from Streptococcus thermophilus (strain ATCC BAA-250 / LMG 18311).